Here is a 428-residue protein sequence, read N- to C-terminus: UDP-N-acetylglucosamine 1-carboxyvinyltransferase (428 aa).

25-26 (KN) is a phosphoenolpyruvate binding site. Position 102 (arginine 102) interacts with UDP-N-acetyl-alpha-D-glucosamine. Cysteine 126 (proton donor) is an active-site residue. Position 126 is a 2-(S-cysteinyl)pyruvic acid O-phosphothioketal (cysteine 126). UDP-N-acetyl-alpha-D-glucosamine-binding residues include aspartate 316 and valine 338.

The protein belongs to the EPSP synthase family. MurA subfamily.

The protein resides in the cytoplasm. The catalysed reaction is phosphoenolpyruvate + UDP-N-acetyl-alpha-D-glucosamine = UDP-N-acetyl-3-O-(1-carboxyvinyl)-alpha-D-glucosamine + phosphate. The protein operates within cell wall biogenesis; peptidoglycan biosynthesis. Cell wall formation. Adds enolpyruvyl to UDP-N-acetylglucosamine. This chain is UDP-N-acetylglucosamine 1-carboxyvinyltransferase, found in Anaplasma marginale (strain Florida).